The following is a 252-amino-acid chain: Acetoacetate decarboxylase (252 aa).

K116 functions as the Schiff-base intermediate with acetoacetate in the catalytic mechanism.

The protein belongs to the ADC family.

The enzyme catalyses acetoacetate + H(+) = acetone + CO2. In terms of biological role, catalyzes the conversion of acetoacetate to acetone and carbon dioxide. In Paraburkholderia phytofirmans (strain DSM 17436 / LMG 22146 / PsJN) (Burkholderia phytofirmans), this protein is Acetoacetate decarboxylase.